The primary structure comprises 463 residues: Cysteine--tRNA ligase (463 aa).

Position 27 (C27) interacts with Zn(2+). The 'HIGH' region motif lies at 29 to 39 (MTVYDYCHLGH). Zn(2+) is bound by residues C208, H233, and E237. Residues 265-269 (KMSKS) carry the 'KMSKS' region motif. K268 is an ATP binding site.

Belongs to the class-I aminoacyl-tRNA synthetase family. Monomer. Requires Zn(2+) as cofactor.

The protein localises to the cytoplasm. The catalysed reaction is tRNA(Cys) + L-cysteine + ATP = L-cysteinyl-tRNA(Cys) + AMP + diphosphate. This is Cysteine--tRNA ligase from Marinobacter nauticus (strain ATCC 700491 / DSM 11845 / VT8) (Marinobacter aquaeolei).